Reading from the N-terminus, the 124-residue chain is MTGEGYKQAIVVRRDLGMGRGKAAAQAAHASCEAVFLILESGRPEWRRWLEMWRLQGQAKVVLRVESLAELQEVYSKAVEEGLPASFVRDAGKTQLEPGTPTAAAVGPAPSRLVDRITGGLKLF.

The protein belongs to the PTH2 family.

It is found in the cytoplasm. It catalyses the reaction an N-acyl-L-alpha-aminoacyl-tRNA + H2O = an N-acyl-L-amino acid + a tRNA + H(+). The natural substrate for this enzyme may be peptidyl-tRNAs which drop off the ribosome during protein synthesis. This chain is Peptidyl-tRNA hydrolase, found in Aeropyrum pernix (strain ATCC 700893 / DSM 11879 / JCM 9820 / NBRC 100138 / K1).